The primary structure comprises 51 residues: Protein SspM (51 aa).

Belongs to the alpha/beta-type SASP family.

In Mycolicibacterium phlei (Mycobacterium phlei), this protein is Protein SspM (sspM).